The sequence spans 266 residues: Small ribosomal subunit protein uS3 (266 aa).

In terms of domain architecture, KH type-2 spans 39–107; sequence VREYLKKKLK…PVHVNIEEIR (69 aa). The segment at 218–266 is disordered; sequence EVAEDKRPRRNARPGDRRPRRDGEGGAPGARRGAPRRGAGKPEDGKTGE. Basic and acidic residues-rich tracts occupy residues 230–241 and 257–266; these read RPGDRRPRRDGE and GKPEDGKTGE.

It belongs to the universal ribosomal protein uS3 family. As to quaternary structure, part of the 30S ribosomal subunit. Forms a tight complex with proteins S10 and S14.

In terms of biological role, binds the lower part of the 30S subunit head. Binds mRNA in the 70S ribosome, positioning it for translation. In Burkholderia multivorans (strain ATCC 17616 / 249), this protein is Small ribosomal subunit protein uS3.